The following is a 915-amino-acid chain: Protein translocase subunit SecA (915 aa).

ATP is bound by residues Gln-87, Gly-105–Thr-109, and Asp-516. A disordered region spans residues Gln-854–Glu-915. Residues Cys-899, Cys-901, Cys-910, and His-911 each contribute to the Zn(2+) site.

Belongs to the SecA family. Monomer and homodimer. Part of the essential Sec protein translocation apparatus which comprises SecA, SecYEG and auxiliary proteins SecDF-YajC and YidC. The cofactor is Zn(2+).

It localises to the cell inner membrane. It is found in the cytoplasm. It carries out the reaction ATP + H2O + cellular proteinSide 1 = ADP + phosphate + cellular proteinSide 2.. Functionally, part of the Sec protein translocase complex. Interacts with the SecYEG preprotein conducting channel. Has a central role in coupling the hydrolysis of ATP to the transfer of proteins into and across the cell membrane, serving both as a receptor for the preprotein-SecB complex and as an ATP-driven molecular motor driving the stepwise translocation of polypeptide chains across the membrane. This chain is Protein translocase subunit SecA, found in Cellvibrio japonicus (strain Ueda107) (Pseudomonas fluorescens subsp. cellulosa).